The sequence spans 406 residues: Acetylornithine/succinyldiaminopimelate aminotransferase (406 aa).

Pyridoxal 5'-phosphate is bound by residues 108 to 109 (GT) and Phe-141. Arg-144 lines the N(2)-acetyl-L-ornithine pocket. A pyridoxal 5'-phosphate-binding site is contributed by 226–229 (DEVQ). Lys-255 bears the N6-(pyridoxal phosphate)lysine mark. Ser-283 provides a ligand contact to N(2)-acetyl-L-ornithine. Thr-284 is a binding site for pyridoxal 5'-phosphate.

It belongs to the class-III pyridoxal-phosphate-dependent aminotransferase family. ArgD subfamily. As to quaternary structure, homodimer. It depends on pyridoxal 5'-phosphate as a cofactor.

The protein localises to the cytoplasm. It catalyses the reaction N(2)-acetyl-L-ornithine + 2-oxoglutarate = N-acetyl-L-glutamate 5-semialdehyde + L-glutamate. The enzyme catalyses N-succinyl-(2S,6S)-2,6-diaminopimelate + 2-oxoglutarate = (S)-2-succinylamino-6-oxoheptanedioate + L-glutamate. Its pathway is amino-acid biosynthesis; L-arginine biosynthesis; N(2)-acetyl-L-ornithine from L-glutamate: step 4/4. It functions in the pathway amino-acid biosynthesis; L-lysine biosynthesis via DAP pathway; LL-2,6-diaminopimelate from (S)-tetrahydrodipicolinate (succinylase route): step 2/3. Involved in both the arginine and lysine biosynthetic pathways. The sequence is that of Acetylornithine/succinyldiaminopimelate aminotransferase from Escherichia coli O6:H1 (strain CFT073 / ATCC 700928 / UPEC).